The following is a 264-amino-acid chain: 3-methyl-2-oxobutanoate hydroxymethyltransferase 2 (264 aa).

The Mg(2+) site is built by Asp-44 and Asp-83. 3-methyl-2-oxobutanoate contacts are provided by residues 44–45 (DS), Asp-83, and Lys-111. Glu-113 contributes to the Mg(2+) binding site. Catalysis depends on Glu-180, which acts as the Proton acceptor.

It belongs to the PanB family. In terms of assembly, homodecamer; pentamer of dimers. It depends on Mg(2+) as a cofactor.

Its subcellular location is the cytoplasm. The enzyme catalyses 3-methyl-2-oxobutanoate + (6R)-5,10-methylene-5,6,7,8-tetrahydrofolate + H2O = 2-dehydropantoate + (6S)-5,6,7,8-tetrahydrofolate. It participates in cofactor biosynthesis; (R)-pantothenate biosynthesis; (R)-pantoate from 3-methyl-2-oxobutanoate: step 1/2. Its function is as follows. Catalyzes the reversible reaction in which hydroxymethyl group from 5,10-methylenetetrahydrofolate is transferred onto alpha-ketoisovalerate to form ketopantoate. In Hahella chejuensis (strain KCTC 2396), this protein is 3-methyl-2-oxobutanoate hydroxymethyltransferase 2.